The following is a 320-amino-acid chain: Ferrochelatase (320 aa).

2 residues coordinate Fe cation: histidine 194 and glutamate 272.

The protein belongs to the ferrochelatase family.

It is found in the cytoplasm. The catalysed reaction is heme b + 2 H(+) = protoporphyrin IX + Fe(2+). Its pathway is porphyrin-containing compound metabolism; protoheme biosynthesis; protoheme from protoporphyrin-IX: step 1/1. In terms of biological role, catalyzes the ferrous insertion into protoporphyrin IX. The polypeptide is Ferrochelatase (Desulfotalea psychrophila (strain LSv54 / DSM 12343)).